The sequence spans 48 residues: Sperm protamine R3 isoform 2 (48 aa).

A compositionally biased stretch (basic residues) spans Ala-1 to Ser-29. Positions Ala-1 to Pro-48 are disordered.

In terms of tissue distribution, testis.

The protein localises to the nucleus. Its subcellular location is the chromosome. Protamines substitute for histones in the chromatin of sperm during the haploid phase of spermatogenesis. They compact sperm DNA into a highly condensed, stable and inactive complex. This Hydrolagus colliei (Spotted ratfish) protein is Sperm protamine R3 isoform 2.